Here is a 37-residue protein sequence, read N- to C-terminus: Cytochrome b6-f complex subunit 5 (37 aa).

A helical membrane pass occupies residues 5 to 25; sequence LLSGIVLGLIPITLVGLFVTA.

Belongs to the PetG family. The 4 large subunits of the cytochrome b6-f complex are cytochrome b6, subunit IV (17 kDa polypeptide, PetD), cytochrome f and the Rieske protein, while the 4 small subunits are PetG, PetL, PetM and PetN. The complex functions as a dimer.

The protein localises to the plastid. The protein resides in the chloroplast thylakoid membrane. Component of the cytochrome b6-f complex, which mediates electron transfer between photosystem II (PSII) and photosystem I (PSI), cyclic electron flow around PSI, and state transitions. PetG is required for either the stability or assembly of the cytochrome b6-f complex. This is Cytochrome b6-f complex subunit 5 from Welwitschia mirabilis (Tree tumbo).